The chain runs to 2753 residues: Maltase-glucoamylase (2753 aa).

Residues 1-13 are Cytoplasmic-facing; sequence MARKKLKKFTTLE. Residues 14 to 34 form a helical; Signal-anchor for type II membrane protein membrane-spanning segment; that stretch reads IVLSVLLLVLFIISIVLIVLL. The Lumenal portion of the chain corresponds to 35-2753; that stretch reads AKESLKSTAP…FTSLTWISTL (2719 aa). Positions 41–87 are disordered; that stretch reads STAPDPGTTGTPDPGTTGTPDPGTTGTTHARTTGPPDPGTTGTTPVS. Positions 44–85 are enriched in low complexity; sequence PDPGTTGTPDPGTTGTPDPGTTGTTHARTTGPPDPGTTGTTP. A P-type 1 domain is found at 88–134; that stretch reads AECPVVNELERINCIPDQPPTKATCDQRGCCWNPQGAVSVPWCYYSK. Disulfide bonds link cysteine 90/cysteine 118, cysteine 101/cysteine 117, and cysteine 112/cysteine 130. The N-linked (GlcNAc...) asparagine glycan is linked to asparagine 135. Acarbose is bound at residue aspartate 289. A glycan (N-linked (GlcNAc...) asparagine) is linked at asparagine 295. The maltase stretch occupies residues 356-737; that stretch reads PEQVVQEYLE…FRAHSRGDTV (382 aa). Aspartate 413 contacts acarbose. 2 positions are modified to sulfotyrosine: tyrosine 416 and tyrosine 425. Asparagine 457, asparagine 458, and asparagine 479 each carry an N-linked (GlcNAc...) asparagine glycan. Aspartate 529 acts as the Nucleophile in catalysis. Glutamate 532 is a catalytic residue. 2 residues coordinate acarbose: arginine 612 and aspartate 628. Cysteines 659 and 670 form a disulfide. Histidine 686 contributes to the acarbose binding site. Residues asparagine 707, asparagine 749, asparagine 827, asparagine 885, asparagine 912, asparagine 977, asparagine 989, and asparagine 1255 are each glycosylated (N-linked (GlcNAc...) asparagine). The region spanning 954–1000 is the P-type 2 domain; sequence WSIKIRDEEKIDCYPDENGASAENCTARGCIWEASNSSGVPFCYFVN. 2 disulfides stabilise this stretch: cysteine 966–cysteine 983 and cysteine 978–cysteine 996. Residues 1221–1632 form a glucoamylase region; that stretch reads TPELVTQQYT…MQKAHTEGVT (412 aa). Position 1282 is a sulfotyrosine (tyrosine 1282). N-linked (GlcNAc...) asparagine glycans are attached at residues asparagine 1323, asparagine 1364, and asparagine 1388. The active-site Nucleophile is the aspartate 1420. Glutamate 1423 is an active-site residue. The active-site Proton donor is aspartate 1526. Residues 1850–1896 enclose the P-type 3 domain; it reads WSIKIRDEEKIDCYPDENGDSAENCTARGCIWEASNSSGVPFCYFVN. 2 cysteine pairs are disulfide-bonded: cysteine 1862/cysteine 1879 and cysteine 1874/cysteine 1892. Residues asparagine 2499, asparagine 2568, asparagine 2738, and asparagine 2743 are each glycosylated (N-linked (GlcNAc...) asparagine).

It belongs to the glycosyl hydrolase 31 family. Monomer. Post-translationally, N- and O-glycosylated. Does not undergo intracellular or extracellular proteolytic cleavage. In terms of processing, sulfated. As to expression, broadly expressed. Highly expressed in small intestine. Expressed in granulocytes.

The protein resides in the apical cell membrane. The enzyme catalyses Hydrolysis of terminal, non-reducing (1-&gt;4)-linked alpha-D-glucose residues with release of alpha-D-glucose.. It catalyses the reaction D-maltoheptaose + H2O = D-maltohexaose + alpha-D-glucose. It carries out the reaction D-maltohexaose + H2O = D-maltopentaose + alpha-D-glucose. The catalysed reaction is D-maltopentaose + H2O = D-maltotetraose + alpha-D-glucose. The enzyme catalyses D-maltotetraose + H2O = D-maltotriose + alpha-D-glucose. It catalyses the reaction D-maltotriose + H2O = D-maltose + alpha-D-glucose. It carries out the reaction D-maltose + H2O = alpha-D-glucose + D-glucose. The catalysed reaction is nigerose + H2O = alpha-D-glucose + D-glucose. The enzyme catalyses kojibiose + H2O = alpha-D-glucose + D-glucose. It catalyses the reaction isomaltose + H2O = alpha-D-glucose + D-glucose. It carries out the reaction 6-O-alpha-D-glucopyranosyl-D-fructose + H2O = alpha-D-glucose + D-fructose. The protein operates within carbohydrate degradation. With respect to regulation, down-regulated at high oligomaltose concentration as it occurs during the mealtime. Down-regulated by anti-diabetic drug acarbose. Its function is as follows. Alpha-(1,4) exo-glucosidase involved in breakdown of dietary starch oligosaccharides in small intestine. Cleaves the non-reducing alpha-(1,4)-linked glucose residue in linear dextrins with retention of anomeric center stereochemistry. Mainly hydrolyzes short length oligomaltoses having two to seven glucose residues. Can cleave alpha-(1,2), alpha-(1,3) and alpha-(1,6) glycosidic linkages with lower efficiency, whereas beta glycosidic linkages are usually not hydrolyzed. The protein is Maltase-glucoamylase of Homo sapiens (Human).